Consider the following 570-residue polypeptide: Proline--tRNA ligase (570 aa).

This sequence belongs to the class-II aminoacyl-tRNA synthetase family. ProS type 1 subfamily. Homodimer.

Its subcellular location is the cytoplasm. The enzyme catalyses tRNA(Pro) + L-proline + ATP = L-prolyl-tRNA(Pro) + AMP + diphosphate. Its function is as follows. Catalyzes the attachment of proline to tRNA(Pro) in a two-step reaction: proline is first activated by ATP to form Pro-AMP and then transferred to the acceptor end of tRNA(Pro). As ProRS can inadvertently accommodate and process non-cognate amino acids such as alanine and cysteine, to avoid such errors it has two additional distinct editing activities against alanine. One activity is designated as 'pretransfer' editing and involves the tRNA(Pro)-independent hydrolysis of activated Ala-AMP. The other activity is designated 'posttransfer' editing and involves deacylation of mischarged Ala-tRNA(Pro). The misacylated Cys-tRNA(Pro) is not edited by ProRS. The sequence is that of Proline--tRNA ligase from Shewanella sp. (strain ANA-3).